The sequence spans 244 residues: Pyridoxal phosphate homeostasis protein (244 aa).

Lysine 37 bears the N6-(pyridoxal phosphate)lysine mark.

Belongs to the pyridoxal phosphate-binding protein YggS/PROSC family.

Its function is as follows. Pyridoxal 5'-phosphate (PLP)-binding protein, which may be involved in intracellular homeostatic regulation of pyridoxal 5'-phosphate (PLP), the active form of vitamin B6. The polypeptide is Pyridoxal phosphate homeostasis protein (Caenorhabditis elegans).